We begin with the raw amino-acid sequence, 341 residues long: HTH-type transcriptional repressor PurR (341 aa).

Residues 2 to 56 (ATIKDVAKRANVSTTTVSHVINKTRFVAEETRNAVWAAIKELHYSPSAVARSLKV) form the HTH lacI-type domain. A DNA-binding region (H-T-H motif) is located at residues 4–23 (IKDVAKRANVSTTTVSHVIN). A DNA-binding region spans residues 48–56 (SAVARSLKV). Positions 73, 190, 192, 221, and 275 each coordinate hypoxanthine.

As to quaternary structure, homodimer.

The protein operates within purine metabolism; purine nucleotide biosynthesis [regulation]. Functionally, is the main repressor of the genes involved in the de novo synthesis of purine nucleotides, regulating purB, purC, purEK, purF, purHD, purL, purMN and guaBA expression. PurR is allosterically activated to bind its cognate DNA by binding the purine corepressors, hypoxanthine or guanine, thereby effecting transcription repression. This chain is HTH-type transcriptional repressor PurR, found in Escherichia coli (strain UTI89 / UPEC).